A 586-amino-acid polypeptide reads, in one-letter code: MSANPRWDISRALGVAKLFHLVCGVREACVTPFLTLYLRQLGLAAPWVGTLMGTKHLIAAFWAPVCAFLAKSYRKRRALLIGSLLGSVGASLLMVLVPPVDKNRVHFPCNGSSGLTSTDALPGVTLPVNITSAQESASSHPAKRTAEVEMPGFRNPPGESDRETFRDLHVYLAPSVEGARTTSQALLHPVTSGLKDHPWEVTFEVVKTALPLLPGGKGPGNPANLSGTKGKAWAFDLSLEALRRTFILSLGSVAFWELLTAPLEQVADDSLYEFLDFVDATDRYRSLWVWRLLGMSAGVCGITALVGQLDCFLMTSGPRGVVHFYGYSVVSTLALLVSIAFPIPICQQWEPSYKRVKALSIVGGDPHLILLASTTVLVGAIVSTVQNFLFWHMKDHGSGELVMGFSVALSLLGEILLHPFKATLLRKLSRTGLVGLGLSCLAGQLLYYSFLWSWWSVLPIQILSAISNRALWWAVGASVEDLATPRMERALSALFRGHFYGSGCSLGSFVGGFVVMRFSLAVLYQACCVALLLWLALLLSIQRRLPRERKIKYSKLLSMEVSDTSDSEQGTEQDWLVKAMREEHSD.

Transmembrane regions (helical) follow at residues 50–70 and 78–98; these read TLMGTKHLIAAFWAPVCAFLA and ALLIGSLLGSVGASLLMVLVP. Residues 133–160 form a disordered region; the sequence is AQESASSHPAKRTAEVEMPGFRNPPGES. The next 9 membrane-spanning stretches (helical) occupy residues 246–266, 287–307, 326–346, 361–381, 400–420, 433–455, 456–476, 499–519, and 521–541; these read FILSLGSVAFWELLTAPLEQV, LWVWRLLGMSAGVCGITALVG, GYSVVSTLALLVSIAFPIPIC, IVGGDPHLILLASTTVLVGAI, ELVMGFSVALSLLGEILLHPF, LVGLGLSCLAGQLLYYSFLWSWW, SVLPIQILSAISNRALWWAVG, FYGSGCSLGSFVGGFVVMRFS, and AVLYQACCVALLLWLALLLSI.

Belongs to the major facilitator superfamily. MFSD6 family.

The protein resides in the membrane. This is Major facilitator superfamily domain-containing protein 6-like (MFSD6L) from Homo sapiens (Human).